Reading from the N-terminus, the 98-residue chain is Large ribosomal subunit protein uL23 (98 aa).

Belongs to the universal ribosomal protein uL23 family. Part of the 50S ribosomal subunit. Contacts protein L29, and trigger factor when it is bound to the ribosome.

In terms of biological role, one of the early assembly proteins it binds 23S rRNA. One of the proteins that surrounds the polypeptide exit tunnel on the outside of the ribosome. Forms the main docking site for trigger factor binding to the ribosome. In Roseobacter denitrificans (strain ATCC 33942 / OCh 114) (Erythrobacter sp. (strain OCh 114)), this protein is Large ribosomal subunit protein uL23.